The sequence spans 233 residues: Bcl-2-like protein 1 (233 aa).

Positions 4 to 24 (SNRELVVDFLSYKLSQKGYSW) match the BH4 motif. Residues 28 to 71 (SDVEENRTEAPEGTESEMETPSAINGNPSWHLADSPAVNGATGH) are disordered. At Ser-49 the chain carries Phosphoserine; by PLK3. The residue at position 62 (Ser-62) is a Phosphoserine; by CDK1. Residues 86–100 (VKQALREAGDEFELR) carry the BH3 motif. The short motif at 129–148 (ELFRDGVNWGRIVAFFSFGG) is the BH1 element. The short motif at 180–195 (PWIQENGGWDTFVELY) is the BH2 element. Residues 210 to 226 (FNRWFLTGMTVAGVVLL) traverse the membrane as a helical segment.

The protein belongs to the Bcl-2 family. Homodimer. Interacts with BCL2L11. Interacts with BAD. Interacts with PGAM5. Interacts with HEBP2. Interacts with p53/TP53 and BBC3; interaction with BBC3 disrupts the interaction with p53/TP53. Interacts with ATP5F1A and ATP5F1B; the interactions mediate the association of isoform Bcl-X(L) with the mitochondrial membrane ATP synthase F(1)F(0) ATP synthase. Interacts with VDAC1. Interacts with BCL2L11 (via BH3). Interacts with RNF183. Interacts with GIMAP3/IAN4 and GIMAP5/IAN5. Interacts with GIMAP5 and HSPA8/HSC70; the interaction between HSPA8 and BCL2L1 is impaired in the absence of GIMAP5. Interacts with isoform 4 of CLU; this interaction releases and activates BAX and promotes cell death. As to quaternary structure, forms heterodimers with BAX, BAK or BCL2; heterodimerization with BAX does not seem to be required for anti-apoptotic activity. Interacts with isoform 1 of SIVA1; the interaction inhibits the anti-apoptotic activity. Interacts with IKZF3. Interacts with RTL10/BOP. Interacts with DNM1L and CLTA; DNM1L and BCL2L1 isoform BCL-X(L) may form a complex in synaptic vesicles that also contains clathrin and MFF. Interacts (via the loop between motifs BH4 and BH3) with NLRP1 (via LRR repeats), but not with NLRP2, NLRP3, NLRP4, PYCARD, nor MEFV. Interacts with BECN1. In terms of processing, proteolytically cleaved by caspases during apoptosis. The cleaved protein, lacking the BH4 motif, has pro-apoptotic activity. Post-translationally, phosphorylated on Ser-62 by CDK1. This phosphorylation is partial in normal mitotic cells, but complete in G2-arrested cells upon DNA-damage, thus promoting subsequent apoptosis probably by triggering caspases-mediated proteolysis. Phosphorylated by PLK3, leading to regulate the G2 checkpoint and progression to cytokinesis during mitosis. Phosphorylation at Ser-49 appears during the S phase and G2, disappears rapidly in early mitosis during prometaphase, metaphase and early anaphase, and re-appears during telophase and cytokinesis. Ubiquitinated by RNF183 during prolonged ER stress, leading to degradation by the proteosome. Bcl-X(S) is expressed at high levels in cells that undergo a high rate of turnover, such as developing lymphocytes. In contrast, Bcl-X(L) is found in tissues containing long-lived postmitotic cells, such as adult brain.

Its subcellular location is the mitochondrion inner membrane. It localises to the mitochondrion outer membrane. It is found in the mitochondrion matrix. The protein resides in the cytoplasmic vesicle. The protein localises to the secretory vesicle. Its subcellular location is the synaptic vesicle membrane. It localises to the cytoplasm. It is found in the cytosol. The protein resides in the cytoskeleton. The protein localises to the microtubule organizing center. Its subcellular location is the centrosome. It localises to the nucleus membrane. Functionally, potent inhibitor of cell death. Inhibits activation of caspases. Appears to regulate cell death by blocking the voltage-dependent anion channel (VDAC) by binding to it and preventing the release of the caspase activator, CYC1, from the mitochondrial membrane. Also acts as a regulator of G2 checkpoint and progression to cytokinesis during mitosis. In terms of biological role, isoform Bcl-X(L) also regulates presynaptic plasticity, including neurotransmitter release and recovery, number of axonal mitochondria as well as size and number of synaptic vesicle clusters. During synaptic stimulation, increases ATP availability from mitochondria through regulation of mitochondrial membrane ATP synthase F(1)F(0) activity and regulates endocytic vesicle retrieval in hippocampal neurons through association with DMN1L and stimulation of its GTPase activity in synaptic vesicles. May attenuate inflammation impairing NLRP1-inflammasome activation, hence CASP1 activation and IL1B release. Isoform Bcl-X(S) promotes apoptosis. In Homo sapiens (Human), this protein is Bcl-2-like protein 1 (BCL2L1).